A 214-amino-acid chain; its full sequence is RNA pyrophosphohydrolase (214 aa).

Positions 6-149 (GFRPNVGIIL…KRDVYQLALT (144 aa)) constitute a Nudix hydrolase domain. The Nudix box motif lies at 38–59 (GGIKYGETPMQAMYRELHEETG).

This sequence belongs to the Nudix hydrolase family. RppH subfamily. The cofactor is a divalent metal cation.

In terms of biological role, accelerates the degradation of transcripts by removing pyrophosphate from the 5'-end of triphosphorylated RNA, leading to a more labile monophosphorylated state that can stimulate subsequent ribonuclease cleavage. The polypeptide is RNA pyrophosphohydrolase (Burkholderia orbicola (strain MC0-3)).